The chain runs to 323 residues: Annexin A5 (323 aa).

Annexin repeat units follow at residues 17-88 (FNDK…ALMV), 89-160 (PAHL…SLVQ), 172-244 (GQVE…AVVK), and 248-319 (SIQG…LLCG).

This sequence belongs to the annexin family.

Its function is as follows. Calcium/phospholipid-binding protein which promotes membrane fusion and is involved in exocytosis. The polypeptide is Annexin A5 (Cynops pyrrhogaster (Japanese fire-bellied newt)).